We begin with the raw amino-acid sequence, 130 residues long: Fluoride-specific ion channel FluC (130 aa).

4 consecutive transmembrane segments (helical) span residues 3–23 (FVFL…YFVG), 38–58 (LGTF…GHLA), 67–87 (FGIF…SYGL), and 102–122 (VSYV…GWFL). 2 residues coordinate Na(+): Gly77 and Thr80.

This sequence belongs to the fluoride channel Fluc/FEX (TC 1.A.43) family.

It localises to the cell inner membrane. It catalyses the reaction fluoride(in) = fluoride(out). Its activity is regulated as follows. Na(+) is not transported, but it plays an essential structural role and its presence is essential for fluoride channel function. Its function is as follows. Fluoride-specific ion channel. Important for reducing fluoride concentration in the cell, thus reducing its toxicity. The protein is Fluoride-specific ion channel FluC of Helicobacter pylori (strain HPAG1).